The following is a 399-amino-acid chain: Ornithine aminotransferase (399 aa).

At Lys255 the chain carries N6-(pyridoxal phosphate)lysine.

This sequence belongs to the class-III pyridoxal-phosphate-dependent aminotransferase family. OAT subfamily. Pyridoxal 5'-phosphate is required as a cofactor.

It localises to the cytoplasm. The enzyme catalyses a 2-oxocarboxylate + L-ornithine = L-glutamate 5-semialdehyde + an L-alpha-amino acid. The protein operates within amino-acid biosynthesis; L-proline biosynthesis; L-glutamate 5-semialdehyde from L-ornithine: step 1/1. Its function is as follows. Catalyzes the interconversion of ornithine to glutamate semialdehyde. The polypeptide is Ornithine aminotransferase (Brevibacillus brevis (strain 47 / JCM 6285 / NBRC 100599)).